Here is a 121-residue protein sequence, read N- to C-terminus: DNA-directed RNA polymerase subunit Rpo8 (121 aa).

Belongs to the archaeal Rpo8 RNA polymerase subunit family. As to quaternary structure, part of the 13-subunit RNA polymerase complex. In terms of processing, this subunit is phosphorylated.

Its subcellular location is the cytoplasm. The catalysed reaction is RNA(n) + a ribonucleoside 5'-triphosphate = RNA(n+1) + diphosphate. In terms of biological role, DNA-dependent RNA polymerase (RNAP) catalyzes the transcription of DNA into RNA using the four ribonucleoside triphosphates as substrates. This is DNA-directed RNA polymerase subunit Rpo8 from Sulfolobus acidocaldarius (strain ATCC 33909 / DSM 639 / JCM 8929 / NBRC 15157 / NCIMB 11770).